A 319-amino-acid chain; its full sequence is Putative G-protein coupled receptor B0244.7 (319 aa).

Residue Asn-28 is glycosylated (N-linked (GlcNAc...) asparagine). 6 helical membrane-spanning segments follow: residues 49–69 (AIFI…IYIF), 107–127 (LPVI…FIIF), 131–151 (SFLS…IAVV), 166–186 (VLLI…CGIV), 206–226 (GPVL…CLVI), and 261–281 (LFAG…SAII).

Belongs to the G-protein coupled receptor 1 family. B0244 subfamily.

The protein resides in the cell membrane. The polypeptide is Putative G-protein coupled receptor B0244.7 (Caenorhabditis elegans).